The chain runs to 107 residues: U-scoloptoxin(19)-Sm1a (107 aa).

A signal peptide spans 1 to 20 (MRFLVSVAFLLTVSSLLVSG).

This sequence belongs to the scoloptoxin-19 family. Contains 6 disulfide bonds. As to expression, expressed by the venom gland.

The protein localises to the secreted. This chain is U-scoloptoxin(19)-Sm1a, found in Scolopendra morsitans (Tanzanian blue ringleg centipede).